A 356-amino-acid chain; its full sequence is Heparan sulfate 2-O-sulfotransferase 1 (356 aa).

At 1–11 (MGLLRIMMPPK) the chain is on the cytoplasmic side. Residues 12 to 28 (LQLLAVVAFAVAMLFLE) form a helical; Signal-anchor for type II membrane protein membrane-spanning segment. A coiled-coil region spans residues 24–51 (MLFLENQIQKLEESRSKLERAIARHEVR). The Lumenal segment spans residues 29–356 (NQIQKLEESR…FYEKIYPKSN (328 aa)). Lysine 83, threonine 84, alanine 85, serine 86, threonine 87, and serine 88 together coordinate adenosine 3',5'-bisphosphate. N-linked (GlcNAc...) asparagine glycosylation is found at asparagine 108 and asparagine 127. Residues histidine 140 and histidine 142 contribute to the active site. Residues arginine 164 and serine 172 each coordinate adenosine 3',5'-bisphosphate. 2 disulfides stabilise this stretch: cysteine 201–cysteine 209 and cysteine 222–cysteine 228. Adenosine 3',5'-bisphosphate is bound by residues tyrosine 279, serine 285, threonine 290, and lysine 293.

It belongs to the sulfotransferase 3 family. Homotrimer. Interacts with the C5-epimerase GLCE. N-glycosylated.

It is found in the golgi apparatus membrane. Catalyzes the transfer of a sulfo group from 3'-phospho-5'-adenylyl sulfate (PAPS) to the 2-OH position of iduronic acid (IdoA) or glucuronic acid (GlcA) within the heparan sulfate (HS) chain and participates in HS biosynthesis. Required for metanephric development of kidney formation, suggesting that 2-O-sulfation within HS is essential for signaling between ureteric bud and metanephric mesenchyme. This is Heparan sulfate 2-O-sulfotransferase 1 from Pongo abelii (Sumatran orangutan).